The chain runs to 430 residues: Lipoyl synthase, chloroplastic (430 aa).

Residues 1 to 16 are compositionally biased toward polar residues; that stretch reads MRSLATLHQSPASCSR. The N-terminal 40 residues, 1 to 40, are a transit peptide targeting the chloroplast; it reads MRSLATLHQSPASCSRSAPVAPCPARRANSSRRVARQGPR. 2 disordered regions span residues 1–55 and 85–119; these read MRSL…SEDV and HLRSKSKSAAPVSPFAAPSPGSPSASSMLGPSLGA. Over residues 91 to 119 the composition is skewed to low complexity; sequence KSAAPVSPFAAPSPGSPSASSMLGPSLGA. [4Fe-4S] cluster-binding residues include cysteine 155, cysteine 160, cysteine 166, cysteine 183, cysteine 187, cysteine 190, and serine 397. The Radical SAM core domain occupies 166 to 386; the sequence is CWNGELATAT…KFGQEEIGFR (221 aa).

This sequence belongs to the radical SAM superfamily. Lipoyl synthase family. [4Fe-4S] cluster is required as a cofactor.

The protein localises to the plastid. Its subcellular location is the chloroplast. It carries out the reaction [[Fe-S] cluster scaffold protein carrying a second [4Fe-4S](2+) cluster] + N(6)-octanoyl-L-lysyl-[protein] + 2 oxidized [2Fe-2S]-[ferredoxin] + 2 S-adenosyl-L-methionine + 4 H(+) = [[Fe-S] cluster scaffold protein] + N(6)-[(R)-dihydrolipoyl]-L-lysyl-[protein] + 4 Fe(3+) + 2 hydrogen sulfide + 2 5'-deoxyadenosine + 2 L-methionine + 2 reduced [2Fe-2S]-[ferredoxin]. The protein operates within protein modification; protein lipoylation via endogenous pathway; protein N(6)-(lipoyl)lysine from octanoyl-[acyl-carrier-protein]: step 2/2. In terms of biological role, catalyzes the radical-mediated insertion of two sulfur atoms into the C-6 and C-8 positions of the octanoyl moiety bound to the lipoyl domains of lipoate-dependent enzymes, thereby converting the octanoylated domains into lipoylated derivatives. In Chlamydomonas reinhardtii (Chlamydomonas smithii), this protein is Lipoyl synthase, chloroplastic.